Here is a 133-residue protein sequence, read N- to C-terminus: Ribonucleases P/MRP protein subunit POP8 (133 aa).

As to quaternary structure, component of nuclear RNase P and RNase MRP complexes. RNase P consists of an RNA moiety and at least 9 protein subunits including POP1, POP3, POP4, POP5, POP6, POP7, POP8, RPP1 and RPR2. RNase MRP complex consists of an RNA moiety and at least 10 protein subunits including POP1, POP3, POP4, POP5, POP6, POP7, POP8, RMP1, RPP1 and SNM1, many of which are shared with the RNase P complex.

Its subcellular location is the nucleus. It carries out the reaction Endonucleolytic cleavage of RNA, removing 5'-extranucleotides from tRNA precursor.. Functionally, component of ribonuclease P, a protein complex that generates mature tRNA molecules by cleaving their 5'-ends. Also a component of RNase MRP, which cleaves pre-rRNA sequences. The protein is Ribonucleases P/MRP protein subunit POP8 (POP8) of Saccharomyces cerevisiae (strain ATCC 204508 / S288c) (Baker's yeast).